The chain runs to 343 residues: Selenide, water dikinase (343 aa).

C15 is an active-site residue. Residues K18 and 46-48 each bind ATP; that span reads HKD. Mg(2+) is bound at residue D49. ATP is bound by residues D66, D89, and 137–139; that span reads GHS. D89 is a Mg(2+) binding site. D225 contributes to the Mg(2+) binding site.

Belongs to the selenophosphate synthase 1 family. Class I subfamily. As to quaternary structure, homodimer. Requires Mg(2+) as cofactor.

It carries out the reaction hydrogenselenide + ATP + H2O = selenophosphate + AMP + phosphate + 2 H(+). Synthesizes selenophosphate from selenide and ATP. In Sulfurimonas denitrificans (strain ATCC 33889 / DSM 1251) (Thiomicrospira denitrificans (strain ATCC 33889 / DSM 1251)), this protein is Selenide, water dikinase.